Reading from the N-terminus, the 330-residue chain is Type II methyltransferase M.MthTI (330 aa).

Residues 3–328 form the SAM-dependent MTase C5-type domain; that stretch reads MDIASFFSGA…KKIKKDLEGV (326 aa). Cys-73 is a catalytic residue.

This sequence belongs to the class I-like SAM-binding methyltransferase superfamily. C5-methyltransferase family.

It carries out the reaction a 2'-deoxycytidine in DNA + S-adenosyl-L-methionine = a 5-methyl-2'-deoxycytidine in DNA + S-adenosyl-L-homocysteine + H(+). A methylase that recognizes the double-stranded sequence 5'-GGCC-3', methylates C-3 on both strands, and protects the DNA from cleavage by the MthTI endonuclease. The sequence is that of Type II methyltransferase M.MthTI (mthTIM) from Methanothermobacter thermautotrophicus (Methanobacterium thermoformicicum).